Consider the following 374-residue polypeptide: Type IV secretion system protein PtlG homolog (374 aa).

Residues 38 to 56 (WMFALVAVALSCLLATGIW) form a helical membrane-spanning segment. The tract at residues 87 to 116 (PREPEPAPLPDMPAAPNPILPQPRPAPPVP) is disordered. A compositionally biased stretch (pro residues) spans 92–116 (PAPLPDMPAAPNPILPQPRPAPPVP).

The protein belongs to the TrbI/VirB10 family.

The protein localises to the cell membrane. This is Type IV secretion system protein PtlG homolog (ptlG) from Bordetella parapertussis (strain 12822 / ATCC BAA-587 / NCTC 13253).